Reading from the N-terminus, the 198-residue chain is Probable GTP-binding protein EngB (198 aa).

The EngB-type G domain maps to 22-195; the sequence is DLPEIALAGR…WKAIHKMTKT (174 aa). Residues 30–37, 57–61, 75–78, 142–145, and 174–176 each bind GTP; these read GRSNVGKS, GKTQT, DVPG, TKAD, and FSS. Ser-37 and Thr-59 together coordinate Mg(2+).

Belongs to the TRAFAC class TrmE-Era-EngA-EngB-Septin-like GTPase superfamily. EngB GTPase family. Mg(2+) serves as cofactor.

Necessary for normal cell division and for the maintenance of normal septation. This is Probable GTP-binding protein EngB from Bacillus mycoides (strain KBAB4) (Bacillus weihenstephanensis).